Here is a 267-residue protein sequence, read N- to C-terminus: Thiamine pyrophosphokinase 2 (267 aa).

The protein belongs to the thiamine pyrophosphokinase family. As to expression, expressed in leaves and at lower levels in flowers.

It is found in the cytoplasm. It localises to the cytosol. It catalyses the reaction thiamine + ATP = thiamine diphosphate + AMP + H(+). The protein operates within cofactor biosynthesis; thiamine diphosphate biosynthesis; thiamine diphosphate from thiamine: step 1/1. Catalyzes the phosphorylation of thiamine to thiamine pyrophosphate (TPP). TPP is an active cofactor for enzymes involved in glycolysis and energy production. Plant leaves require high levels of TPP for photosynthesis and carbohydrate metabolism. The polypeptide is Thiamine pyrophosphokinase 2 (Arabidopsis thaliana (Mouse-ear cress)).